We begin with the raw amino-acid sequence, 127 residues long: Fumarate reductase subunit C (127 aa).

The next 3 helical transmembrane spans lie at 30-50 (ATVL…GSLV), 67-87 (VVIA…HTFF), and 107-127 (IIVL…LIVV).

This sequence belongs to the FrdC family. Part of an enzyme complex containing four subunits: a flavoprotein (FrdA), an iron-sulfur protein (FrdB), and two hydrophobic anchor proteins (FrdC and FrdD).

The protein localises to the cell inner membrane. Its function is as follows. Anchors the catalytic components of the fumarate reductase complex to the cell membrane, binds quinones. This is Fumarate reductase subunit C from Vibrio vulnificus (strain CMCP6).